Reading from the N-terminus, the 407-residue chain is Argininosuccinate synthase (407 aa).

Residues 16–24 and Ala44 contribute to the ATP site; that span reads AYSGGLDTS. L-citrulline is bound by residues Tyr96 and Ser101. An ATP-binding site is contributed by Gly126. 3 residues coordinate L-aspartate: Thr128, Asn132, and Asp133. Asn132 contacts L-citrulline. Residues Arg136, Ser185, Ser194, Glu270, and Tyr282 each coordinate L-citrulline.

This sequence belongs to the argininosuccinate synthase family. Type 1 subfamily. As to quaternary structure, homotetramer.

The protein localises to the cytoplasm. The catalysed reaction is L-citrulline + L-aspartate + ATP = 2-(N(omega)-L-arginino)succinate + AMP + diphosphate + H(+). It participates in amino-acid biosynthesis; L-arginine biosynthesis; L-arginine from L-ornithine and carbamoyl phosphate: step 2/3. This is Argininosuccinate synthase from Shewanella denitrificans (strain OS217 / ATCC BAA-1090 / DSM 15013).